A 365-amino-acid chain; its full sequence is Dihydroorotate dehydrogenase (quinone) (365 aa).

FMN contacts are provided by residues 61–65 and Ser-85; that span reads AGFDK. Position 65 (Lys-65) interacts with substrate. 110 to 114 provides a ligand contact to substrate; it reads NRMGF. The FMN site is built by Asn-139 and Asn-170. Asn-170 contacts substrate. The active-site Nucleophile is Ser-173. Substrate is bound at residue Asn-175. Positions 214 and 242 each coordinate FMN. 243-244 is a substrate binding site; that stretch reads NT. Residues Gly-266, Gly-295, and 316–317 contribute to the FMN site; that span reads YS.

The protein belongs to the dihydroorotate dehydrogenase family. Type 2 subfamily. In terms of assembly, monomer. It depends on FMN as a cofactor.

It is found in the cell membrane. It catalyses the reaction (S)-dihydroorotate + a quinone = orotate + a quinol. The protein operates within pyrimidine metabolism; UMP biosynthesis via de novo pathway; orotate from (S)-dihydroorotate (quinone route): step 1/1. In terms of biological role, catalyzes the conversion of dihydroorotate to orotate with quinone as electron acceptor. This chain is Dihydroorotate dehydrogenase (quinone), found in Bradyrhizobium diazoefficiens (strain JCM 10833 / BCRC 13528 / IAM 13628 / NBRC 14792 / USDA 110).